Reading from the N-terminus, the 491-residue chain is Proline--tRNA ligase (491 aa).

The protein belongs to the class-II aminoacyl-tRNA synthetase family. ProS type 3 subfamily. In terms of assembly, homodimer.

Its subcellular location is the cytoplasm. It catalyses the reaction tRNA(Pro) + L-proline + ATP = L-prolyl-tRNA(Pro) + AMP + diphosphate. Its function is as follows. Catalyzes the attachment of proline to tRNA(Pro) in a two-step reaction: proline is first activated by ATP to form Pro-AMP and then transferred to the acceptor end of tRNA(Pro). The polypeptide is Proline--tRNA ligase (Cytophaga hutchinsonii (strain ATCC 33406 / DSM 1761 / CIP 103989 / NBRC 15051 / NCIMB 9469 / D465)).